Consider the following 373-residue polypeptide: Chorismate synthase (373 aa).

R46 lines the NADP(+) pocket. Residues 123–125 (RSS), 251–252 (NA), G295, 310–314 (KPTPS), and R337 each bind FMN.

It belongs to the chorismate synthase family. It depends on FMNH2 as a cofactor.

The enzyme catalyses 5-O-(1-carboxyvinyl)-3-phosphoshikimate = chorismate + phosphate. It functions in the pathway metabolic intermediate biosynthesis; chorismate biosynthesis; chorismate from D-erythrose 4-phosphate and phosphoenolpyruvate: step 7/7. Its function is as follows. Catalyzes the anti-1,4-elimination of the C-3 phosphate and the C-6 proR hydrogen from 5-enolpyruvylshikimate-3-phosphate (EPSP) to yield chorismate, which is the branch point compound that serves as the starting substrate for the three terminal pathways of aromatic amino acid biosynthesis. This reaction introduces a second double bond into the aromatic ring system. The protein is Chorismate synthase of Methanococcus maripaludis (strain C5 / ATCC BAA-1333).